The primary structure comprises 446 residues: Exodeoxyribonuclease 7 large subunit (446 aa).

Belongs to the XseA family. Heterooligomer composed of large and small subunits.

It localises to the cytoplasm. It carries out the reaction Exonucleolytic cleavage in either 5'- to 3'- or 3'- to 5'-direction to yield nucleoside 5'-phosphates.. In terms of biological role, bidirectionally degrades single-stranded DNA into large acid-insoluble oligonucleotides, which are then degraded further into small acid-soluble oligonucleotides. This Geotalea uraniireducens (strain Rf4) (Geobacter uraniireducens) protein is Exodeoxyribonuclease 7 large subunit.